The following is a 548-amino-acid chain: Probable malate:quinone oxidoreductase (548 aa).

The segment at Asp-521–Leu-548 is disordered. Residues Pro-530–Lys-541 show a composition bias toward low complexity.

Belongs to the MQO family. FAD serves as cofactor.

The catalysed reaction is (S)-malate + a quinone = a quinol + oxaloacetate. It functions in the pathway carbohydrate metabolism; tricarboxylic acid cycle; oxaloacetate from (S)-malate (quinone route): step 1/1. In Shigella boydii serotype 4 (strain Sb227), this protein is Probable malate:quinone oxidoreductase.